Consider the following 435-residue polypeptide: Aspartate aminotransferase (435 aa).

Pyridoxal 5'-phosphate is bound by residues Tyr-69 and 100–101; that span reads SL. 139–141 is a substrate binding site; sequence YDR. Pyridoxal 5'-phosphate-binding positions include Asn-189, Tyr-221, and 254 to 256; that span reads STS. Arg-392 is a binding site for substrate.

Belongs to the class-I pyridoxal-phosphate-dependent aminotransferase family. Pyridoxal 5'-phosphate is required as a cofactor.

The catalysed reaction is L-aspartate + 2-oxoglutarate = oxaloacetate + L-glutamate. Its function is as follows. Main aspartate aminotransferase that couples nitrogen assimilation to aspartate synthesis. Has a weak, but significant, side activity toward kynurenine (Kyn). Oxaloacetate and 2-oxoglutarate, but not pyruvate, serve as amino acceptors, while Asp, Glu and Kyn serve as the best amino donors. Essential for axenic growth and survival of M.tuberculosis in macrophages and in mice. This Mycobacterium tuberculosis (strain ATCC 25618 / H37Rv) protein is Aspartate aminotransferase.